The following is a 259-amino-acid chain: 14-3-3-like protein (259 aa).

Positions 237-259 (DTTDDAEDEIREGSKQESGDGQQ) are disordered. The segment covering 247–259 (REGSKQESGDGQQ) has biased composition (basic and acidic residues).

This sequence belongs to the 14-3-3 family. As to expression, leaves specific.

This is 14-3-3-like protein from Solanum tuberosum (Potato).